The following is a 122-amino-acid chain: Small ribosomal subunit protein uS13 (122 aa).

A disordered region spans residues 97-122; that stretch reads PVRGQRTHTNAKTRKGRSKLPIAGKK.

It belongs to the universal ribosomal protein uS13 family. Part of the 30S ribosomal subunit. Forms a loose heterodimer with protein S19. Forms two bridges to the 50S subunit in the 70S ribosome.

Functionally, located at the top of the head of the 30S subunit, it contacts several helices of the 16S rRNA. In the 70S ribosome it contacts the 23S rRNA (bridge B1a) and protein L5 of the 50S subunit (bridge B1b), connecting the 2 subunits; these bridges are implicated in subunit movement. Contacts the tRNAs in the A and P-sites. In Wolbachia pipientis subsp. Culex pipiens (strain wPip), this protein is Small ribosomal subunit protein uS13.